The sequence spans 460 residues: Ammonium transporter 1 member 3 (460 aa).

10 consecutive transmembrane segments (helical) span residues Ala15–Ala37, Leu50–Phe72, Phe98–Ile117, Thr124–Trp146, Ile166–Val188, Asn209–Phe227, Ala255–Val277, Pro305–Leu327, Ala337–Ala356, and Gly377–Val399.

It belongs to the ammonia transporter channel (TC 1.A.11.2) family. In terms of tissue distribution, leaves.

The protein localises to the membrane. Its function is as follows. Ammonium transporter that may be involved in ammonium transport throughout the plant. This is Ammonium transporter 1 member 3 (AMT1-3) from Solanum lycopersicum (Tomato).